The sequence spans 323 residues: Homoserine kinase (323 aa).

Belongs to the pseudomonas-type ThrB family.

The catalysed reaction is L-homoserine + ATP = O-phospho-L-homoserine + ADP + H(+). It participates in amino-acid biosynthesis; L-threonine biosynthesis; L-threonine from L-aspartate: step 4/5. In Phenylobacterium zucineum (strain HLK1), this protein is Homoserine kinase.